The chain runs to 734 residues: Photosystem I P700 chlorophyll a apoprotein A2 (734 aa).

The next 8 membrane-spanning stretches (helical) occupy residues I46–A69, L135–Q158, L175–I199, I273–Y291, L330–Y353, A369–I395, A417–H439, and F517–V535. Positions 559 and 568 each coordinate [4Fe-4S] cluster. 2 helical membrane passes run A575 to W596 and L643 to I665. Chlorophyll a contacts are provided by H654, M662, and Y670. W671 lines the phylloquinone pocket. A helical membrane pass occupies residues L707 to A727.

Belongs to the PsaA/PsaB family. As to quaternary structure, the PsaA/B heterodimer binds the P700 chlorophyll special pair and subsequent electron acceptors. PSI consists of a core antenna complex that captures photons, and an electron transfer chain that converts photonic excitation into a charge separation. The eukaryotic PSI reaction center is composed of at least 11 subunits. Requires P700 is a chlorophyll a/chlorophyll a' dimer, A0 is one or more chlorophyll a, A1 is one or both phylloquinones and FX is a shared 4Fe-4S iron-sulfur center. as cofactor.

It is found in the plastid. It localises to the chloroplast thylakoid membrane. It carries out the reaction reduced [plastocyanin] + hnu + oxidized [2Fe-2S]-[ferredoxin] = oxidized [plastocyanin] + reduced [2Fe-2S]-[ferredoxin]. PsaA and PsaB bind P700, the primary electron donor of photosystem I (PSI), as well as the electron acceptors A0, A1 and FX. PSI is a plastocyanin-ferredoxin oxidoreductase, converting photonic excitation into a charge separation, which transfers an electron from the donor P700 chlorophyll pair to the spectroscopically characterized acceptors A0, A1, FX, FA and FB in turn. Oxidized P700 is reduced on the lumenal side of the thylakoid membrane by plastocyanin. The polypeptide is Photosystem I P700 chlorophyll a apoprotein A2 (Angiopteris evecta (Mule's foot fern)).